We begin with the raw amino-acid sequence, 230 residues long: Probable thioesterase YBR096W (230 aa).

This sequence belongs to the lcsJ thioesterase family.

The polypeptide is Probable thioesterase YBR096W (Saccharomyces cerevisiae (strain ATCC 204508 / S288c) (Baker's yeast)).